We begin with the raw amino-acid sequence, 316 residues long: Nucleoside diphosphate-linked moiety X motif 6 (316 aa).

Residues 141 to 273 enclose the Nudix hydrolase domain; that stretch reads SHQVGVAGAV…TSRVARLLLY (133 aa). Positions 176–197 match the Nudix box motif; that stretch reads GLSEPEEDIGDTAVREVFEETG.

Belongs to the Nudix hydrolase family. As to quaternary structure, monomer and homodimer. As to expression, detected in liver, kidney and esophagus (at protein level). Ubiquitous.

Its subcellular location is the cytoplasm. It localises to the nucleus. The protein resides in the mitochondrion. Its function is as follows. May contribute to the regulation of cell proliferation. This chain is Nucleoside diphosphate-linked moiety X motif 6 (NUDT6), found in Homo sapiens (Human).